The sequence spans 101 residues: Small ribosomal subunit protein uS14 (101 aa).

Residues 1–11 (MAKKSSVEKNN) show a composition bias toward basic and acidic residues. The disordered stretch occupies residues 1–22 (MAKKSSVEKNNRRQRMVKNAAA). A compositionally biased stretch (basic residues) spans 12 to 22 (RRQRMVKNAAA).

It belongs to the universal ribosomal protein uS14 family. Part of the 30S ribosomal subunit. Contacts proteins S3 and S10.

Its function is as follows. Binds 16S rRNA, required for the assembly of 30S particles and may also be responsible for determining the conformation of the 16S rRNA at the A site. The polypeptide is Small ribosomal subunit protein uS14 (Afipia carboxidovorans (strain ATCC 49405 / DSM 1227 / KCTC 32145 / OM5) (Oligotropha carboxidovorans)).